The chain runs to 766 residues: Phospholipid phosphatase-related protein type 4 (766 aa).

The residue at position 37 (S37) is a Phosphoserine. The next 3 helical transmembrane spans lie at 68-88 (LPCF…SLYF), 120-140 (AIPF…TIMV), and 179-199 (FVGV…IIQL). N-linked (GlcNAc...) asparagine glycosylation is found at N215 and N220. Residues 248-268 (SFPSQHATLAAFAAVYVSMYF) traverse the membrane as a helical segment. A glycan (N-linked (GlcNAc...) asparagine) is linked at N269. A run of 2 helical transmembrane segments spans residues 277-297 (KLLK…CGLT) and 309-329 (VYCG…YAVG). At S347 the chain carries Phosphoserine. An N-linked (GlcNAc...) asparagine glycan is attached at N363. The residue at position 386 (S386) is a Phosphoserine. N433 carries an N-linked (GlcNAc...) asparagine glycan. A Phosphoserine modification is found at S439. The tract at residues 454–494 (SKNESRKMSLQVMDTEPEGQSPPRSIEMRSSSEPSRVGVNG) is disordered. An N-linked (GlcNAc...) asparagine glycan is attached at N456. Phosphoserine is present on residues S462 and S474. N515, N545, and N570 each carry an N-linked (GlcNAc...) asparagine glycan. S608 carries the post-translational modification Phosphoserine. Disordered regions lie at residues 634 to 654 (PIIQ…KWKA), 672 to 701 (DSES…HHHH), and 742 to 766 (ERSN…AYKD). Basic and acidic residues predominate over residues 672 to 697 (DSESCESLKDSFGSGDRKRSNIDSNE). A compositionally biased stretch (polar residues) spans 743–752 (RSNSPENTRN).

The protein belongs to the PA-phosphatase related phosphoesterase family. In terms of processing, O-glycosylated. Probably at Ser-347. Brain-specific, it is exclusively expressed in neurons (at protein level).

It localises to the postsynaptic density membrane. Postsynaptic density membrane protein that indirectly regulates glutamatergic synaptic transmission through lysophosphatidic acid (LPA)-mediated signaling pathways. Binds lysophosphatidic acid (LPA) and mediates its internalization into cells. Could act as receptor or a transporter of this lipid at the post-synaptic membrane. Modulates lysophosphatidic acid (LPA) activity in neuron axonal outgrowth during development by attenuating phospholipid-induced axon collapse. This Mus musculus (Mouse) protein is Phospholipid phosphatase-related protein type 4.